The following is a 2290-amino-acid chain: Protein Ycf2 (2290 aa).

Positions Gly-505–Pro-530 are disordered. Basic and acidic residues predominate over residues Arg-511 to Gln-523. ATP is bound at residue Gly-1639–Ser-1646.

The protein belongs to the Ycf2 family.

The protein resides in the plastid. It localises to the chloroplast stroma. In terms of biological role, probable ATPase of unknown function. Its presence in a non-photosynthetic plant (Epifagus virginiana) and experiments in tobacco indicate that it has an essential function which is probably not related to photosynthesis. The sequence is that of Protein Ycf2 from Ceratophyllum demersum (Rigid hornwort).